The sequence spans 205 residues: UPF0056 membrane protein MJ1677 (205 aa).

A run of 6 helical transmembrane segments spans residues 7–27 (ILAFSSIFSILNPFGAVPVFI), 49–69 (ALAILLAFALFGEWILKFFGI), 70–90 (SLDAFKIAGGILLLLISLDMV), 112–132 (IALMPLATPLLAGPGSITACM), 145–165 (FLVILAILLSLGITYLTLLSA), and 185–205 (GLILTAIAVQMIVNGIRGALL).

It belongs to the UPF0056 (MarC) family.

It is found in the cell membrane. The sequence is that of UPF0056 membrane protein MJ1677 from Methanocaldococcus jannaschii (strain ATCC 43067 / DSM 2661 / JAL-1 / JCM 10045 / NBRC 100440) (Methanococcus jannaschii).